The sequence spans 240 residues: Probable septum site-determining protein MinC (240 aa).

The protein belongs to the MinC family. In terms of assembly, interacts with MinD and FtsZ.

Functionally, cell division inhibitor that blocks the formation of polar Z ring septums. Rapidly oscillates between the poles of the cell to destabilize FtsZ filaments that have formed before they mature into polar Z rings. Prevents FtsZ polymerization. The sequence is that of Probable septum site-determining protein MinC from Aeromonas hydrophila subsp. hydrophila (strain ATCC 7966 / DSM 30187 / BCRC 13018 / CCUG 14551 / JCM 1027 / KCTC 2358 / NCIMB 9240 / NCTC 8049).